The sequence spans 106 residues: MADAKVDSATEISAKDLKEKKLIEEKENGKDATNGKENEENGEPEIDDEDDDEVDEDDEEGEGDEDEDEDDDDEDLGGGTKRGADDDEDEDEDDEDDVDPKKQKVN.

A compositionally biased stretch (basic and acidic residues) spans 1-39 (MADAKVDSATEISAKDLKEKKLIEEKENGKDATNGKENE). The segment at 1-106 (MADAKVDSAT…DVDPKKQKVN (106 aa)) is disordered. Residue serine 8 is modified to Phosphoserine. Position 10 is a phosphothreonine (threonine 10). Acidic residues-rich tracts occupy residues 40–76 (ENGE…DEDL) and 85–98 (DDDE…EDDV).

The protein belongs to the pro/parathymosin family. As to expression, uniformly expressed in all embryonic cells at 4 and 8 hpf. At the 20-somite stage (18 hpf), ubiquitously expressed in the developing nervous system, in the tail bud and in the pronephric ducts. Also expressed in some placodes, including the anterior lateral line placode, otic vesicle and olfactory placode. At 27 hpf, strong expression persists in the central nervous system and the olfactory placode. Expressed strongly in the eyes and the pectoral fin buds. In the tail region, expressed in the spinal cord, in the posterior lateral line precursors, and persists in the pronephric ducts. At 48 hpf, expressed in all head territories including the developing brain, eyes, and pharyngeal arches. More caudally, expression persists in the pectoral fin buds, the spinal cord and, for the first time, appears in the intestine. At 72 hpf, expressed only in restricted regions of the brain, in pharyngeal arches region and in the amacrine cells and the horizontal cells of the retina.

Its subcellular location is the nucleus. This is Prothymosin alpha-B from Danio rerio (Zebrafish).